The sequence spans 338 residues: Glycerol-3-phosphate dehydrogenase [NAD(P)+] (338 aa).

NADPH is bound by residues serine 13, tryptophan 14, and lysine 108. Residues lysine 108, glycine 139, and serine 141 each contribute to the sn-glycerol 3-phosphate site. Alanine 143 contributes to the NADPH binding site. Sn-glycerol 3-phosphate is bound by residues lysine 194, aspartate 247, serine 257, arginine 258, and asparagine 259. The active-site Proton acceptor is the lysine 194. Arginine 258 contributes to the NADPH binding site. 2 residues coordinate NADPH: valine 282 and glutamate 284.

This sequence belongs to the NAD-dependent glycerol-3-phosphate dehydrogenase family.

It is found in the cytoplasm. The enzyme catalyses sn-glycerol 3-phosphate + NAD(+) = dihydroxyacetone phosphate + NADH + H(+). It catalyses the reaction sn-glycerol 3-phosphate + NADP(+) = dihydroxyacetone phosphate + NADPH + H(+). The protein operates within membrane lipid metabolism; glycerophospholipid metabolism. In terms of biological role, catalyzes the reduction of the glycolytic intermediate dihydroxyacetone phosphate (DHAP) to sn-glycerol 3-phosphate (G3P), the key precursor for phospholipid synthesis. This is Glycerol-3-phosphate dehydrogenase [NAD(P)+] from Listeria monocytogenes serotype 4a (strain HCC23).